The primary structure comprises 715 residues: Lactococcin transport/processing ATP-binding protein LcnC-like (715 aa).

One can recognise a Peptidase C39 domain in the interval 11-138 (QVDEMDCGCA…SEWTGISLFL (128 aa)). C17 is an active-site residue. 5 helical membrane-spanning segments follow: residues 167–187 (VILN…LGSY), 197–217 (IPNA…LTYI), 237–257 (LAID…MSFF), 282–302 (TILS…ILGL), and 307–327 (LFLL…IFTP). The ABC transmembrane type-1 domain maps to 168-450 (ILNIVIASFI…IINLQTKLQK (283 aa)). The ABC transporter domain maps to 482–715 (LNMSEISYQY…NGFYAQLYHN (234 aa)). 515-522 (GISGSGKS) contributes to the ATP binding site.

It belongs to the ABC transporter superfamily. HlyB family.

It localises to the cell membrane. Involved in the export process of a bacteriocin lactococcin. This chain is Lactococcin transport/processing ATP-binding protein LcnC-like (lcnC), found in Lactococcus lactis subsp. lactis (strain IL1403) (Streptococcus lactis).